A 349-amino-acid chain; its full sequence is Probable ethanolamine kinase A (349 aa).

This sequence belongs to the choline/ethanolamine kinase family.

It localises to the cytoplasm. The catalysed reaction is ethanolamine + ATP = phosphoethanolamine + ADP + H(+). It participates in phospholipid metabolism; phosphatidylethanolamine biosynthesis; phosphatidylethanolamine from ethanolamine: step 1/3. Highly specific for ethanolamine phosphorylation. May be a rate-controlling step in phosphatidylethanolamine biosynthesis. The polypeptide is Probable ethanolamine kinase A (etnkA) (Dictyostelium discoideum (Social amoeba)).